The chain runs to 409 residues: Multidrug resistance protein MdtG (409 aa).

Helical transmembrane passes span 16-36 (LIVA…VMPF), 58-78 (IVFS…GGLA), 92-112 (LGMG…QFLI), 115-135 (ALLG…ATQV), 146-166 (TLST…GLLA), 173-193 (PVFF…LFCI), 224-244 (LFVT…ILTL), 256-276 (VAFI…LLSA), 291-311 (ILIT…YVQT), and 379-399 (AVFL…WNSL).

This sequence belongs to the major facilitator superfamily. DHA1 family. MdtG (TC 2.A.1.2.20) subfamily.

It localises to the cell inner membrane. Its function is as follows. Confers resistance to fosfomycin and deoxycholate. This is Multidrug resistance protein MdtG from Escherichia coli O9:H4 (strain HS).